The chain runs to 334 residues: Mitochondrial glycine transporter (334 aa).

Solcar repeat units lie at residues 22–106 (SKTT…LRQG), 135–219 (LSNW…LKRR), and 237–321 (SSSS…LILR). The next 6 helical transmembrane spans lie at 28–53 (FVAGLCSGLTSSILLQPADLLKTRVQ), 81–107 (GTLPSALRTGFGSALYFTSLNALRQGI), 141–166 (LATGAIARVAAGFVMMPVTVLKVRYE), 194–217 (GFGATAARDAPYAGLYVLFYEQLK), 241–267 (INFVSGGLAAGLATAITNPFDAVKTRL), and 296–314 (GLGLRITRKALSSALAWTV).

It belongs to the mitochondrial carrier (TC 2.A.29) family. SLC25A38 subfamily.

Its subcellular location is the mitochondrion inner membrane. The catalysed reaction is glycine(in) = glycine(out). Functionally, mitochondrial glycine transporter that imports glycine into the mitochondrial matrix. Plays an important role in providing glycine for the first enzymatic step in heme biosynthesis, the condensation of glycine with succinyl-CoA to produce 5-aminolevulinate (ALA) in the mitochondrial matrix. The chain is Mitochondrial glycine transporter from Aspergillus clavatus (strain ATCC 1007 / CBS 513.65 / DSM 816 / NCTC 3887 / NRRL 1 / QM 1276 / 107).